Reading from the N-terminus, the 119-residue chain is V-type proton ATPase subunit F (119 aa).

This sequence belongs to the V-ATPase F subunit family. In terms of assembly, V-ATPase is a heteromultimeric enzyme made up of two complexes: the ATP-hydrolytic V1 complex and the proton translocation V0 complex. The V1 complex consists of three catalytic AB heterodimers that form a heterohexamer, three peripheral stalks each consisting of EG heterodimers, one central rotor including subunits D and F, and the regulatory subunits C and H. The proton translocation complex V0 consists of the proton transport subunit a, a ring of proteolipid subunits c9c'', rotary subunit d, subunits e and f, and the accessory subunits ATP6AP1/Ac45 and ATP6AP2/PRR.

It is found in the cytoplasmic vesicle. The protein resides in the secretory vesicle. It localises to the synaptic vesicle membrane. The protein localises to the clathrin-coated vesicle membrane. Subunit of the V1 complex of vacuolar(H+)-ATPase (V-ATPase), a multisubunit enzyme composed of a peripheral complex (V1) that hydrolyzes ATP and a membrane integral complex (V0) that translocates protons. V-ATPase is responsible for acidifying and maintaining the pH of intracellular compartments and in some cell types, is targeted to the plasma membrane, where it is responsible for acidifying the extracellular environment. This Homo sapiens (Human) protein is V-type proton ATPase subunit F (ATP6V1F).